We begin with the raw amino-acid sequence, 162 residues long: uncharacterized protein (162 aa).

A PUA domain is found at 78–154; sequence KNLVVVDIGA…KAIKNLHYVG (77 aa).

This is an uncharacterized protein from Methanocaldococcus jannaschii (strain ATCC 43067 / DSM 2661 / JAL-1 / JCM 10045 / NBRC 100440) (Methanococcus jannaschii).